The sequence spans 122 residues: MTTTLYTSDHEWLAIEGDVATVGITDYAQSQLGDVVFIELPKLGRALKKAEAAAVVESVKAASDVYAPVTGEVLETNDALAAEPALVNSDAQGKAWFFKIKIADKSELGGLMDEAAYKAHTA.

The Lipoyl-binding domain occupies 19–101 (VATVGITDYA…QGKAWFFKIK (83 aa)). Residue Lys60 is modified to N6-lipoyllysine.

The protein belongs to the GcvH family. In terms of assembly, the glycine cleavage system is composed of four proteins: P, T, L and H. (R)-lipoate is required as a cofactor.

In terms of biological role, the glycine cleavage system catalyzes the degradation of glycine. The H protein shuttles the methylamine group of glycine from the P protein to the T protein. The protein is Glycine cleavage system H protein of Bradyrhizobium diazoefficiens (strain JCM 10833 / BCRC 13528 / IAM 13628 / NBRC 14792 / USDA 110).